The primary structure comprises 353 residues: Quinolinate synthase (353 aa).

Histidine 47 and serine 68 together coordinate iminosuccinate. Cysteine 113 serves as a coordination point for [4Fe-4S] cluster. Iminosuccinate-binding positions include 139–141 (YAN) and serine 156. Cysteine 200 is a [4Fe-4S] cluster binding site. Residues 226-228 (HPE) and threonine 243 each bind iminosuccinate. Cysteine 297 is a [4Fe-4S] cluster binding site.

This sequence belongs to the quinolinate synthase family. Type 1 subfamily. The cofactor is [4Fe-4S] cluster.

It is found in the cytoplasm. It catalyses the reaction iminosuccinate + dihydroxyacetone phosphate = quinolinate + phosphate + 2 H2O + H(+). It participates in cofactor biosynthesis; NAD(+) biosynthesis; quinolinate from iminoaspartate: step 1/1. In terms of biological role, catalyzes the condensation of iminoaspartate with dihydroxyacetone phosphate to form quinolinate. This chain is Quinolinate synthase, found in Serratia proteamaculans (strain 568).